Consider the following 141-residue polypeptide: Large ribosomal subunit protein uL11 (141 aa).

Belongs to the universal ribosomal protein uL11 family. Part of the ribosomal stalk of the 50S ribosomal subunit. Interacts with L10 and the large rRNA to form the base of the stalk. L10 forms an elongated spine to which L12 dimers bind in a sequential fashion forming a multimeric L10(L12)X complex. One or more lysine residues are methylated.

Its function is as follows. Forms part of the ribosomal stalk which helps the ribosome interact with GTP-bound translation factors. The protein is Large ribosomal subunit protein uL11 of Listeria innocua serovar 6a (strain ATCC BAA-680 / CLIP 11262).